Here is a 448-residue protein sequence, read N- to C-terminus: Serine--tRNA ligase (448 aa).

Threonine 246–glutamate 248 provides a ligand contact to L-serine. Residues arginine 277–glutamate 279 and valine 293 contribute to the ATP site. Glutamate 300 contacts L-serine. An ATP-binding site is contributed by glutamate 364–serine 367. Threonine 399 provides a ligand contact to L-serine.

This sequence belongs to the class-II aminoacyl-tRNA synthetase family. Type-1 seryl-tRNA synthetase subfamily. As to quaternary structure, homodimer. The tRNA molecule binds across the dimer.

It localises to the cytoplasm. The catalysed reaction is tRNA(Ser) + L-serine + ATP = L-seryl-tRNA(Ser) + AMP + diphosphate + H(+). It carries out the reaction tRNA(Sec) + L-serine + ATP = L-seryl-tRNA(Sec) + AMP + diphosphate + H(+). The protein operates within aminoacyl-tRNA biosynthesis; selenocysteinyl-tRNA(Sec) biosynthesis; L-seryl-tRNA(Sec) from L-serine and tRNA(Sec): step 1/1. Catalyzes the attachment of serine to tRNA(Ser). Is also able to aminoacylate tRNA(Sec) with serine, to form the misacylated tRNA L-seryl-tRNA(Sec), which will be further converted into selenocysteinyl-tRNA(Sec). The polypeptide is Serine--tRNA ligase (Pyrobaculum islandicum (strain DSM 4184 / JCM 9189 / GEO3)).